We begin with the raw amino-acid sequence, 27 residues long: Protein YqfI (27 aa).

The protein is Protein YqfI of Escherichia coli (strain K12).